The following is a 224-amino-acid chain: MNPPILERDPSDPQKEKKEGVNPVLKLVLELGPLLVFFFANARGEWLVQKFPVLGEFGGPIFVATGLFMAATAIALIASWLLTRTLPIMPMVSGVVVFIFGALTLYLQDDIFIKMKPTIVNTLFGGVLLGGLYFGRSLLGYVFDSAFRLDAEGWRKLTFRWGLFFLFLAVVNEVVWRNFSTDAWVTFKVWGIMPITLLFTFSQMPLILRHSLDDKASGEEKAGK.

6 helical membrane-spanning segments follow: residues 20-40, 61-81, 86-106, 123-143, 156-176, and 187-207; these read GVNP…FFFA, IFVA…ASWL, LPIM…LTLY, LFGG…GYVF, KLTF…EVVW, and FKVW…MPLI.

This sequence belongs to the YciB family.

Its subcellular location is the cell inner membrane. Functionally, plays a role in cell envelope biogenesis, maintenance of cell envelope integrity and membrane homeostasis. This Mesorhizobium japonicum (strain LMG 29417 / CECT 9101 / MAFF 303099) (Mesorhizobium loti (strain MAFF 303099)) protein is Inner membrane-spanning protein YciB.